Here is a 90-residue protein sequence, read N- to C-terminus: UPF0298 protein YlbG (90 aa).

The protein belongs to the UPF0298 family.

It is found in the cytoplasm. The sequence is that of UPF0298 protein YlbG (ylbG) from Bacillus subtilis (strain 168).